The primary structure comprises 490 residues: Zinc finger protein STP4 (490 aa).

Low complexity-rich tracts occupy residues 1–16 (MLVS…SVMS) and 52–73 (PSLP…STLN). The disordered stretch occupies residues 1-85 (MLVSSSFASS…PPPPLTTSYS (85 aa)). Phosphoserine occurs at positions 153 and 155. Positions 231–247 (QQQQQLNSSSSASALPS) are enriched in low complexity. The interval 231 to 273 (QQQQQLNSSSSASALPSIHSPLTNEHTSRYSSSLKDSAKITKQ) is disordered. Residues 250 to 265 (SPLTNEHTSRYSSSLK) show a composition bias toward polar residues. Residues 304–326 (HKCPICQRGFARNNDLIRHKKRH) form a C2H2-type zinc finger. The segment at 338–375 (ESDNNSGADDQDDTARTSANNDSDDSNDKLAASSSSEE) is disordered.

It is found in the cytoplasm. The protein resides in the mitochondrion. It localises to the nucleus. In Saccharomyces cerevisiae (strain ATCC 204508 / S288c) (Baker's yeast), this protein is Zinc finger protein STP4 (STP4).